The chain runs to 450 residues: tRNA modification GTPase MnmE (450 aa).

The (6S)-5-formyl-5,6,7,8-tetrahydrofolate site is built by Arg-23, Glu-80, and Arg-123. Residues 219 to 372 (GLHVVLAGKP…LRQRLLQLAG (154 aa)) enclose the TrmE-type G domain. Residue Asn-229 coordinates K(+). GTP is bound by residues 229–234 (NVGKSS), 248–254 (TPIAGTT), 273–276 (DTAG), and 353–355 (SAR). Residue Ser-233 coordinates Mg(2+). K(+) contacts are provided by Thr-248, Ile-250, and Thr-253. Thr-254 contributes to the Mg(2+) binding site. Residue Lys-450 participates in (6S)-5-formyl-5,6,7,8-tetrahydrofolate binding.

The protein belongs to the TRAFAC class TrmE-Era-EngA-EngB-Septin-like GTPase superfamily. TrmE GTPase family. Homodimer. Heterotetramer of two MnmE and two MnmG subunits. K(+) serves as cofactor.

The protein localises to the cytoplasm. Its function is as follows. Exhibits a very high intrinsic GTPase hydrolysis rate. Involved in the addition of a carboxymethylaminomethyl (cmnm) group at the wobble position (U34) of certain tRNAs, forming tRNA-cmnm(5)s(2)U34. The polypeptide is tRNA modification GTPase MnmE (Bordetella parapertussis (strain 12822 / ATCC BAA-587 / NCTC 13253)).